Consider the following 321-residue polypeptide: Transaldolase (321 aa).

Catalysis depends on K132, which acts as the Schiff-base intermediate with substrate.

It belongs to the transaldolase family. Type 1 subfamily. Homodimer.

Its subcellular location is the cytoplasm. The enzyme catalyses D-sedoheptulose 7-phosphate + D-glyceraldehyde 3-phosphate = D-erythrose 4-phosphate + beta-D-fructose 6-phosphate. It participates in carbohydrate degradation; pentose phosphate pathway; D-glyceraldehyde 3-phosphate and beta-D-fructose 6-phosphate from D-ribose 5-phosphate and D-xylulose 5-phosphate (non-oxidative stage): step 2/3. Functionally, transaldolase is important for the balance of metabolites in the pentose-phosphate pathway. The protein is Transaldolase of Rhizobium etli (strain CIAT 652).